The chain runs to 358 residues: Bi-functional coumaroyl CoA and feruloyl CoA ortho-hydroxylase F6H2-1-1 (358 aa).

Residues 207 to 308 (GSRRININYY…RISVPVFVNP (102 aa)) form the Fe2OG dioxygenase domain. Position 216 (Tyr-216) interacts with 2-oxoglutarate. Fe cation contacts are provided by His-231, Asp-233, and His-289. Residues Arg-299 and Ser-301 each contribute to the 2-oxoglutarate site.

Belongs to the iron/ascorbate-dependent oxidoreductase family. L-ascorbate is required as a cofactor. The cofactor is Fe(2+). In terms of tissue distribution, mostly expressed in underground stems and stems, and, at low levels, in tubers, leaves and petioles.

It catalyses the reaction (E)-4-coumaroyl-CoA + 2-oxoglutarate + O2 = (E)-2,4-dihydroxycinnamoyl-CoA + succinate + CO2. The catalysed reaction is (E)-feruloyl-CoA + 2-oxoglutarate + O2 = (E)-6-hydroxyferuloyl-CoA + succinate + CO2. It participates in phenylpropanoid metabolism. Functionally, 2-oxoglutarate (OG)- and Fe(II)-dependent dioxygenase (2OGD) involved in scopoletin and umbelliferone biosynthesis. Converts feruloyl CoA into 6'-hydroxyferuloyl CoA, and p-coumaroyl CoA into 2,4-dihydroxycinnamoyl-CoA, but has no activity with caffeoyl-CoA. This Ipomoea batatas (Sweet potato) protein is Bi-functional coumaroyl CoA and feruloyl CoA ortho-hydroxylase F6H2-1-1.